A 108-amino-acid polypeptide reads, in one-letter code: MVNLGLSRVDDAVASKHPGLGEYAACQSNAFVKGVSTFVTGTGATFGLQMLVQRKLPYPFQWKVLLAVVAGSVASYWVTRVESQKCSNLWLFLETGQLPKDMGTDRRS.

The next 2 helical transmembrane spans lie at 34 to 52 and 62 to 78; these read GVSTFVTGTGATFGLQMLV and WKVLLAVVAGSVASYWV.

It belongs to the TMEM141 family.

It is found in the membrane. The polypeptide is Transmembrane protein 141 (TMEM141) (Bos taurus (Bovine)).